Reading from the N-terminus, the 114-residue chain is Cytochrome c oxidase subunit 7A2-like, mitochondrial (114 aa).

The N-terminal 55 residues, 1-55 (MYYKFSGFTQKLAGAWASDAYSPQGLRPVVSTEAPPIIFATPTKLSSGPTAYDYA), are a transit peptide targeting the mitochondrion. Lys-69 is modified (N6-acetyllysine). A helical transmembrane segment spans residues 82-107 (PDQMLYRTTMALTVGGTIYCLIALYM).

The protein belongs to the cytochrome c oxidase VIIa family. Interacts with the mitochondrial respiratory complexes III (CIII) and IV (CIV), promoting their association.

It localises to the mitochondrion inner membrane. In terms of biological role, assembly factor that mediates the formation of some mitochondrial respiratory supercomplexes (respirasomes), thereby promoting oxidative phosphorylation and energy metabolism. Acts as a molecular adapter that associates with both mitochondrial respiratory complexes III (CIII) and IV (CIV), promoting their association. Mediates the formation of various mitochondrial respiratory supercomplexes, such as MCIII(2)IV(2), composed of two CIII and two CIV, and the CS-respirasome (MCI(1)III(2)IV(2)), composed of one CI, two CIII and two CIV. Not involved in the formation of the canonical respirasome (MCI(1)III(2)IV(1)), composed of one CI, two CIII and one CIV. The formation of different respirasomes is important for cell adaptation to oxygen conditions and prevent metabolic exhaustion: supercomplexes mediated by COX7A2L/SCAF1 are required to maintain oxidative phosphorylation upon low oxygen conditions and promote metabolic rewiring toward glycolysis. The chain is Cytochrome c oxidase subunit 7A2-like, mitochondrial from Bos taurus (Bovine).